Reading from the N-terminus, the 580-residue chain is Membrane protein insertase YidC (580 aa).

6 helical membrane-spanning segments follow: residues 5-25, 259-279, 362-382, 427-447, 477-497, and 513-533; these read SVTGLALIALIMIVWLQFMSP, KYFVAALIPAGPTGGFYLDGS, GLIIIIFAFLIKLVTYPLSLA, LGGCLPVVLQMPLLFAMFYVF, IPMYGDHIALMPILMAGTVFV, and IMLYMFPAMMLLFFNNMPSGL.

The protein belongs to the OXA1/ALB3/YidC family. Type 1 subfamily. In terms of assembly, interacts with the Sec translocase complex via SecD. Specifically interacts with transmembrane segments of nascent integral membrane proteins during membrane integration.

It is found in the cell inner membrane. In terms of biological role, required for the insertion and/or proper folding and/or complex formation of integral membrane proteins into the membrane. Involved in integration of membrane proteins that insert both dependently and independently of the Sec translocase complex, as well as at least some lipoproteins. Aids folding of multispanning membrane proteins. The protein is Membrane protein insertase YidC of Chlorobium phaeovibrioides (strain DSM 265 / 1930) (Prosthecochloris vibrioformis (strain DSM 265)).